Consider the following 776-residue polypeptide: Photosystem I P700 chlorophyll a apoprotein A1 (776 aa).

Helical transmembrane passes span 76–99 (IFSA…FHGA), 162–185 (LMAL…FHYH), 201–225 (LQHH…HVAN), 309–327 (VAHH…GHVY), 368–391 (WHAQ…HHMY), 407–433 (LGLF…IAVI), 455–477 (AIIS…LYIH), and 557–575 (LMIH…LILL). Positions 599 and 608 each coordinate [4Fe-4S] cluster. 2 helical membrane-spanning segments follow: residues 615–636 (HVFL…YFSW) and 690–712 (LSGY…MFLF). His701 contributes to the divinylchlorophyll a' binding site. Divinyl chlorophyll a is bound by residues Met709 and Tyr717. Trp718 serves as a coordination point for phylloquinone. The chain crosses the membrane as a helical span at residues 750 to 770 (AVGVTHFLFGGIVTTWAFFHA).

This sequence belongs to the PsaA/PsaB family. As to quaternary structure, the PsaA/B heterodimer binds the P700 divinyl chlorophyll special pair and subsequent electron acceptors. PSI consists of a core antenna complex that captures photons, and an electron transfer chain that converts photonic excitation into a charge separation. The cyanobacterial PSI reaction center is composed of one copy each of PsaA,B,C,D,E,F,I,J,K,L,M and X, and forms trimeric complexes. PSI electron transfer chain: 5 divinyl chlorophyll a, 1 divinyl chlorophyll a', 2 phylloquinones and 3 4Fe-4S clusters. PSI core antenna: 90 divinyl chlorophyll a, 22 carotenoids, 3 phospholipids and 1 galactolipid. P700 is a divinyl chlorophyll a/divinyl chlorophyll a' dimer, A0 is one or more divinyl chlorophyll a, A1 is one or both phylloquinones and FX is a shared 4Fe-4S iron-sulfur center. serves as cofactor.

It is found in the cellular thylakoid membrane. The enzyme catalyses reduced [plastocyanin] + hnu + oxidized [2Fe-2S]-[ferredoxin] = oxidized [plastocyanin] + reduced [2Fe-2S]-[ferredoxin]. Its function is as follows. PsaA and PsaB bind P700, the primary electron donor of photosystem I (PSI), as well as the electron acceptors A0, A1 and FX. PSI is a plastocyanin/cytochrome c6-ferredoxin oxidoreductase, converting photonic excitation into a charge separation, which transfers an electron from the donor P700 chlorophyll pair to the spectroscopically characterized acceptors A0, A1, FX, FA and FB in turn. Oxidized P700 is reduced on the lumenal side of the thylakoid membrane by plastocyanin or cytochrome c6. This chain is Photosystem I P700 chlorophyll a apoprotein A1, found in Prochlorococcus marinus (strain MIT 9303).